Consider the following 614-residue polypeptide: Leucine-rich repeat and immunoglobulin-like domain-containing nogo receptor-interacting protein 1 (614 aa).

The first 35 residues, 1–35 (MLAGGVRSMPSPLLACWQPILLLVLGSVLSGSATG), serve as a signal peptide directing secretion. Intrachain disulfides connect cysteine 36/cysteine 42 and cysteine 40/cysteine 51. The LRRNT domain maps to 36–65 (CPPRCECSAQDRAVLCHRKRFVAVPEGIPT). The Extracellular portion of the chain corresponds to 36 to 555 (CPPRCECSAQ…FDIKTLIIAT (520 aa)). LRR repeat units follow at residues 66–87 (ETRL…EFAS), 90–111 (HLEE…AFNN), 114–135 (NLRT…VFTG), 138–159 (NLTK…MFQD), 162–183 (NLKS…AFSG), 186–207 (SLEQ…ALSH), 210–231 (GLIV…SFKR), 258–279 (NLTS…AVRH), 282–303 (YLRF…MLHE), 306–327 (RLQE…AFRG), and 330–351 (YLRV…VFHS). N-linked (GlcNAc...) asparagine glycosylation is present at asparagine 138. Asparagine 196 carries N-linked (GlcNAc...) asparagine glycosylation. Residues asparagine 258, asparagine 268, and asparagine 287 are each glycosylated (N-linked (GlcNAc...) asparagine). N-linked (GlcNAc...) asparagine glycosylation is present at asparagine 335. An LRRCT domain is found at 363-417 (NPLACDCRLLWVFRRRWRLNFNRQQPTCATPEFVQGKEFKDFPDVLLPNYFTCRR). 3 disulfide bridges follow: cysteine 367–cysteine 390, cysteine 369–cysteine 415, and cysteine 440–cysteine 491. An Ig-like C2-type domain is found at 405 to 507 (PDVLLPNYFT…GNDSMPAHLH (103 aa)). N-linked (GlcNAc...) asparagine glycosylation is found at asparagine 486, asparagine 499, asparagine 520, and asparagine 536. Residues 556-576 (TMGFISFLGVVLFCLVLLFLW) traverse the membrane as a helical segment. Residues 577-614 (SRGKGNTKHNIEIEYVPRKSDAGISSADAPRKFNMKMI) lie on the Cytoplasmic side of the membrane. Serine 596 is modified (phosphoserine).

In terms of assembly, homotetramer. Forms a ternary complex with RTN4R/NGFR and RTN4R/TNFRSF19. Interacts with NGRF, RTN4R and MYT1L. Post-translationally, N-glycosylated. Contains predominantly high-mannose glycans.

The protein localises to the cell membrane. Functionally, functional component of the Nogo receptor signaling complex (RTN4R/NGFR) in RhoA activation responsible for some inhibition of axonal regeneration by myelin-associated factors. Is also an important negative regulator of oligodentrocyte differentiation and axonal myelination. Acts in conjunction with RTN4 and RTN4R in regulating neuronal precursor cell motility during cortical development. The sequence is that of Leucine-rich repeat and immunoglobulin-like domain-containing nogo receptor-interacting protein 1 (LINGO1) from Pongo abelii (Sumatran orangutan).